A 22-amino-acid chain; its full sequence is ASNLATGGAGPLIXKGTGGRSS.

Residues 1–22 (ASNLATGGAGPLIXKGTGGRSS) form a disordered region.

Belongs to the complex I NDUFA9 subunit family. In terms of assembly, complex I is composed of about 45 different subunits. Requires FAD as cofactor.

The protein resides in the mitochondrion matrix. In terms of biological role, accessory subunit of the mitochondrial membrane respiratory chain NADH dehydrogenase (Complex I), that is believed not to be involved in catalysis. Complex I functions in the transfer of electrons from NADH to the respiratory chain. The immediate electron acceptor for the enzyme is believed to be ubiquinone. This Solanum tuberosum (Potato) protein is NADH dehydrogenase [ubiquinone] 1 alpha subcomplex subunit 9.